A 118-amino-acid polypeptide reads, in one-letter code: NADH-quinone oxidoreductase subunit A 2 (118 aa).

A run of 3 helical transmembrane segments spans residues 5–25 (YLPI…SLVF), 60–80 (FYII…LYPW), and 87–107 (LGMF…VGYI).

The protein belongs to the complex I subunit 3 family. As to quaternary structure, NDH-1 is composed of 14 different subunits. Subunits NuoA, H, J, K, L, M, N constitute the membrane sector of the complex.

It localises to the cell inner membrane. The catalysed reaction is a quinone + NADH + 5 H(+)(in) = a quinol + NAD(+) + 4 H(+)(out). In terms of biological role, NDH-1 shuttles electrons from NADH, via FMN and iron-sulfur (Fe-S) centers, to quinones in the respiratory chain. The immediate electron acceptor for the enzyme in this species is believed to be ubiquinone. Couples the redox reaction to proton translocation (for every two electrons transferred, four hydrogen ions are translocated across the cytoplasmic membrane), and thus conserves the redox energy in a proton gradient. This is NADH-quinone oxidoreductase subunit A 2 from Geobacter metallireducens (strain ATCC 53774 / DSM 7210 / GS-15).